A 492-amino-acid chain; its full sequence is Glutamyl-tRNA(Gln) amidotransferase subunit A (492 aa).

Catalysis depends on charge relay system residues K79 and S154. The Acyl-ester intermediate role is filled by S178.

It belongs to the amidase family. GatA subfamily. Heterotrimer of A, B and C subunits.

The catalysed reaction is L-glutamyl-tRNA(Gln) + L-glutamine + ATP + H2O = L-glutaminyl-tRNA(Gln) + L-glutamate + ADP + phosphate + H(+). Functionally, allows the formation of correctly charged Gln-tRNA(Gln) through the transamidation of misacylated Glu-tRNA(Gln) in organisms which lack glutaminyl-tRNA synthetase. The reaction takes place in the presence of glutamine and ATP through an activated gamma-phospho-Glu-tRNA(Gln). This chain is Glutamyl-tRNA(Gln) amidotransferase subunit A, found in Acinetobacter baylyi (strain ATCC 33305 / BD413 / ADP1).